The following is a 505-amino-acid chain: Phosphoethanolamine N-methyltransferase (505 aa).

S-adenosyl-L-homocysteine contacts are provided by G76, R81, D97, D122, V123, and N141. Phosphocholine-binding residues include S174, S179, G180, R184, and Y191. N-methylethanolamine phosphate-binding positions include 260–261 and Y269; that span reads QY. Y269 contacts phosphocholine. The S-adenosyl-L-homocysteine site is built by V278, S279, G305, D327, D353, C354, and R370. The phosphocholine site is built by Y401, Y415, R419, Y421, and K487. Residues Y401, Y415, 419-421, and K487 each bind N-methylethanolamine phosphate; that span reads RGY.

Belongs to the class I-like SAM-binding methyltransferase superfamily. PEAMT family.

The enzyme catalyses phosphoethanolamine + S-adenosyl-L-methionine = N-methylethanolamine phosphate + S-adenosyl-L-homocysteine + H(+). It catalyses the reaction N-methylethanolamine phosphate + S-adenosyl-L-methionine = N,N-dimethylethanolamine phosphate + S-adenosyl-L-homocysteine + H(+). It carries out the reaction N,N-dimethylethanolamine phosphate + S-adenosyl-L-methionine = phosphocholine + S-adenosyl-L-homocysteine + H(+). The protein operates within phospholipid metabolism; phosphatidylcholine biosynthesis; phosphocholine from phosphoethanolamine: step 1/1. Its activity is regulated as follows. Inhibited by phosphatidic acid. Its function is as follows. Involved in phosphocholine biosynthesis. Catalyzes the N-methylation of phosphoethanolamine, phosphomonomethylethanolamine and phosphodimethylethanolamine, the three methylation steps required to convert phosphoethanolamine to phosphocholine (PC). The polypeptide is Phosphoethanolamine N-methyltransferase (Triticum aestivum (Wheat)).